Consider the following 495-residue polypeptide: 1-aminocyclopropane-1-carboxylate synthase 6 (495 aa).

Substrate contacts are provided by Glu58 and Tyr96. Residue Lys280 is modified to N6-(pyridoxal phosphate)lysine. A phosphoserine mark is found at Ser480, Ser483, and Ser488.

Belongs to the class-I pyridoxal-phosphate-dependent aminotransferase family. As to quaternary structure, homodimer and heterodimer. In vivo, the relevance of heterodimerization with other ACS enzymes is however unsure. Interacts with GRF3. Pyridoxal 5'-phosphate is required as a cofactor. Phosphorylated on serine residue by MAP kinase (MPK6). In terms of processing, may be processed at its C-terminus. As to expression, expressed in roots and flowers.

The enzyme catalyses S-adenosyl-L-methionine = 1-aminocyclopropane-1-carboxylate + S-methyl-5'-thioadenosine + H(+). The protein operates within alkene biosynthesis; ethylene biosynthesis via S-adenosyl-L-methionine; ethylene from S-adenosyl-L-methionine: step 1/2. Functionally, 1-aminocyclopropane-1-carboxylate synthase (ACS) enzymes catalyze the conversion of S-adenosyl-L-methionine (SAM) into 1-aminocyclopropane-1-carboxylate (ACC), a direct precursor of ethylene. Involved in bacterial flagellin-induced ethylene production. This chain is 1-aminocyclopropane-1-carboxylate synthase 6 (ACS6), found in Arabidopsis thaliana (Mouse-ear cress).